Consider the following 207-residue polypeptide: Guanylate kinase (207 aa).

In terms of domain architecture, Guanylate kinase-like spans 4–184; that stretch reads GTLYIVSAPS…ALMDFKAIIR (181 aa). 11–18 provides a ligand contact to ATP; the sequence is APSGAGKS.

It belongs to the guanylate kinase family.

Its subcellular location is the cytoplasm. The enzyme catalyses GMP + ATP = GDP + ADP. Its function is as follows. Essential for recycling GMP and indirectly, cGMP. This chain is Guanylate kinase, found in Vibrio vulnificus (strain CMCP6).